An 807-amino-acid polypeptide reads, in one-letter code: Leucine--tRNA ligase (807 aa).

The 'HIGH' region signature appears at 40–51 (PYPSGSGLHVGH). The 'KMSKS' region signature appears at 576 to 580 (KMSKS). ATP is bound at residue Lys579.

This sequence belongs to the class-I aminoacyl-tRNA synthetase family.

The protein localises to the cytoplasm. The catalysed reaction is tRNA(Leu) + L-leucine + ATP = L-leucyl-tRNA(Leu) + AMP + diphosphate. The sequence is that of Leucine--tRNA ligase from Chlorobaculum parvum (strain DSM 263 / NCIMB 8327) (Chlorobium vibrioforme subsp. thiosulfatophilum).